The primary structure comprises 213 residues: Pyrrolidone-carboxylate peptidase (213 aa).

Active-site residues include Glu-80, Cys-143, and His-166.

This sequence belongs to the peptidase C15 family. Homotetramer.

It localises to the cytoplasm. The enzyme catalyses Release of an N-terminal pyroglutamyl group from a polypeptide, the second amino acid generally not being Pro.. Its function is as follows. Removes 5-oxoproline from various penultimate amino acid residues except L-proline. The polypeptide is Pyrrolidone-carboxylate peptidase (Clavibacter michiganensis subsp. michiganensis (strain NCPPB 382)).